We begin with the raw amino-acid sequence, 206 residues long: Ribosomal RNA small subunit methyltransferase G (206 aa).

Residues G73, L78, 124 to 125, and R139 contribute to the S-adenosyl-L-methionine site; that span reads VE.

Belongs to the methyltransferase superfamily. RNA methyltransferase RsmG family.

The protein localises to the cytoplasm. The enzyme catalyses guanosine(527) in 16S rRNA + S-adenosyl-L-methionine = N(7)-methylguanosine(527) in 16S rRNA + S-adenosyl-L-homocysteine. Functionally, specifically methylates the N7 position of guanine in position 527 of 16S rRNA. The protein is Ribosomal RNA small subunit methyltransferase G of Yersinia enterocolitica serotype O:8 / biotype 1B (strain NCTC 13174 / 8081).